Reading from the N-terminus, the 551-residue chain is Protein GPR107 (551 aa).

The N-terminal stretch at 1 to 33 (MAVPVPLGRFGSFCLRLLRLLALLELLVHPVLG) is a signal peptide. Residues 40–262 (LKDDVRHKVH…YLSAGEIPLP (223 aa)) lie on the Extracellular side of the membrane. Residues Asn-64 and Asn-209 are each glycosylated (N-linked (GlcNAc...) asparagine). Cys-106 and Cys-226 are disulfide-bonded. A helical transmembrane segment spans residues 263–283 (KLYVSMALFFFLSGTIWIHIL). At 284-292 (RKRRNDVFK) the chain is on the cytoplasmic side. The chain crosses the membrane as a helical span at residues 293 to 313 (IHWLMAALPFTKSLSLVFHAI). Residues 314–336 (DYHYISSQGFPIEGWAVVYYITH) are Extracellular-facing. Residues 337–357 (LLKGALLFITIALIGTGWAFI) traverse the membrane as a helical segment. The Cytoplasmic segment spans residues 358 to 367 (KHILSDKDKK). The helical transmembrane segment at 368–388 (IFMIVIPLQVLANVAYIIIES) threads the bilayer. Over 389 to 401 (TEEGTTEYGLWKD) the chain is Extracellular. The helical transmembrane segment at 402 to 422 (SLFLVDLLCCGAILFPVVWSI) threads the bilayer. Residues 423–449 (RHLQEASATDGKAAINLAKLRLFRHYY) lie on the Cytoplasmic side of the membrane. A helical membrane pass occupies residues 450–470 (VLIVCYIYFTRIIAFLLKFAV). At 471–475 (PFQWK) the chain is on the extracellular side. The chain crosses the membrane as a helical span at residues 476–495 (WLYQLLDETATLVFFVLTGY). At 496 to 551 (KFRPASDNPYLQLSQEDDDLEMESVVTTSGVMENMKKVKKVSNGAVEPQGSWEGTA) the chain is on the cytoplasmic side. The residue at position 537 (Ser-537) is a Phosphoserine.

Belongs to the LU7TM family. Post-translationally, cleaved by FURIN to yield two fragments that remain associated via a disulfide bond.

The protein localises to the cell membrane. The protein resides in the golgi apparatus. It localises to the trans-Golgi network membrane. Its function is as follows. Has been proposed to act as a receptor for neuronostatin, a peptide derived from the somatostatin/SST precursor. Involved in blood sugar regulation through the induction of glucagon in response to low glucose. This chain is Protein GPR107 (Gpr107), found in Mus musculus (Mouse).